We begin with the raw amino-acid sequence, 309 residues long: Formamidopyrimidine-DNA glycosylase (309 aa).

The Schiff-base intermediate with DNA role is filled by Pro-2. Residue Glu-3 is the Proton donor of the active site. The active-site Proton donor; for beta-elimination activity is the Lys-56. The DNA site is built by His-106 and Arg-129. An FPG-type zinc finger spans residues 271-305 (NVYGRQGNACPHCESTLENIKLNGRASVYCPLCQP). Catalysis depends on Arg-295, which acts as the Proton donor; for delta-elimination activity.

Belongs to the FPG family. As to quaternary structure, monomer. Requires Zn(2+) as cofactor.

It carries out the reaction Hydrolysis of DNA containing ring-opened 7-methylguanine residues, releasing 2,6-diamino-4-hydroxy-5-(N-methyl)formamidopyrimidine.. It catalyses the reaction 2'-deoxyribonucleotide-(2'-deoxyribose 5'-phosphate)-2'-deoxyribonucleotide-DNA = a 3'-end 2'-deoxyribonucleotide-(2,3-dehydro-2,3-deoxyribose 5'-phosphate)-DNA + a 5'-end 5'-phospho-2'-deoxyribonucleoside-DNA + H(+). In terms of biological role, involved in base excision repair of DNA damaged by oxidation or by mutagenic agents. Acts as a DNA glycosylase that recognizes and removes damaged bases. Has a preference for oxidized purines, such as 7,8-dihydro-8-oxoguanine (8-oxoG). Has AP (apurinic/apyrimidinic) lyase activity and introduces nicks in the DNA strand. Cleaves the DNA backbone by beta-delta elimination to generate a single-strand break at the site of the removed base with both 3'- and 5'-phosphates. This is Formamidopyrimidine-DNA glycosylase from Psychrobacter arcticus (strain DSM 17307 / VKM B-2377 / 273-4).